Here is a 148-residue protein sequence, read N- to C-terminus: MTSFKLVKYTPRIKKKKGLRKLARKVPTDRLLKFERVFKAQKRIHMSVFKAQRVLDEIRWRYYEETVMILNLMPYRASYPILKLVYSAAANATHYRDFDKTNLFITKAEVSRSTIMKKFRPRARGRSYSIKKTMCNITIVLNIVKKSK.

This sequence belongs to the universal ribosomal protein uL22 family. As to quaternary structure, part of the 50S ribosomal subunit.

Its subcellular location is the plastid. The protein resides in the chloroplast. This protein binds specifically to 23S rRNA. Its function is as follows. The globular domain of the protein is located near the polypeptide exit tunnel on the outside of the subunit, while an extended beta-hairpin is found that lines the wall of the exit tunnel in the center of the 70S ribosome. The protein is Large ribosomal subunit protein uL22c (rpl22) of Zea mays (Maize).